A 226-amino-acid chain; its full sequence is ATP synthase F(0) complex subunit a (226 aa).

The next 6 helical transmembrane spans lie at 12–32 (PTMM…ILFP), 68–88 (WTLM…LGLL), 97–117 (QLSM…VTGF), 138–158 (IPML…ALAV), 164–184 (ITAG…LMSI), and 189–209 (ASIT…VALI).

The protein belongs to the ATPase A chain family. In terms of assembly, component of the ATP synthase complex composed at least of ATP5F1A/subunit alpha, ATP5F1B/subunit beta, ATP5MC1/subunit c (homooctomer), MT-ATP6/subunit a, MT-ATP8/subunit 8, ATP5ME/subunit e, ATP5MF/subunit f, ATP5MG/subunit g, ATP5MK/subunit k, ATP5MJ/subunit j, ATP5F1C/subunit gamma, ATP5F1D/subunit delta, ATP5F1E/subunit epsilon, ATP5PF/subunit F6, ATP5PB/subunit b, ATP5PD/subunit d, ATP5PO/subunit OSCP. ATP synthase complex consists of a soluble F(1) head domain (subunits alpha(3) and beta(3)) - the catalytic core - and a membrane F(0) domain - the membrane proton channel (subunits c, a, 8, e, f, g, k and j). These two domains are linked by a central stalk (subunits gamma, delta, and epsilon) rotating inside the F1 region and a stationary peripheral stalk (subunits F6, b, d, and OSCP). Interacts with DNAJC30; interaction is direct.

The protein localises to the mitochondrion inner membrane. It carries out the reaction H(+)(in) = H(+)(out). Its function is as follows. Subunit a, of the mitochondrial membrane ATP synthase complex (F(1)F(0) ATP synthase or Complex V) that produces ATP from ADP in the presence of a proton gradient across the membrane which is generated by electron transport complexes of the respiratory chain. ATP synthase complex consist of a soluble F(1) head domain - the catalytic core - and a membrane F(1) domain - the membrane proton channel. These two domains are linked by a central stalk rotating inside the F(1) region and a stationary peripheral stalk. During catalysis, ATP synthesis in the catalytic domain of F(1) is coupled via a rotary mechanism of the central stalk subunits to proton translocation. With the subunit c (ATP5MC1), forms the proton-conducting channel in the F(0) domain, that contains two crucial half-channels (inlet and outlet) that facilitate proton movement from the mitochondrial intermembrane space (IMS) into the matrix. Protons are taken up via the inlet half-channel and released through the outlet half-channel, following a Grotthuss mechanism. The chain is ATP synthase F(0) complex subunit a from Dasypus novemcinctus (Nine-banded armadillo).